A 513-amino-acid chain; its full sequence is Light-independent protochlorophyllide reductase subunit B (513 aa).

[4Fe-4S] cluster is bound at residue Asp-36. Asp-299 serves as the catalytic Proton donor. A substrate-binding site is contributed by 434–435 (GM).

The protein belongs to the ChlB/BchB/BchZ family. As to quaternary structure, protochlorophyllide reductase is composed of three subunits; ChlL, ChlN and ChlB. Forms a heterotetramer of two ChlB and two ChlN subunits. [4Fe-4S] cluster is required as a cofactor.

It localises to the plastid. The protein localises to the chloroplast. The enzyme catalyses chlorophyllide a + oxidized 2[4Fe-4S]-[ferredoxin] + 2 ADP + 2 phosphate = protochlorophyllide a + reduced 2[4Fe-4S]-[ferredoxin] + 2 ATP + 2 H2O. Its pathway is porphyrin-containing compound metabolism; chlorophyll biosynthesis (light-independent). Component of the dark-operative protochlorophyllide reductase (DPOR) that uses Mg-ATP and reduced ferredoxin to reduce ring D of protochlorophyllide (Pchlide) to form chlorophyllide a (Chlide). This reaction is light-independent. The NB-protein (ChlN-ChlB) is the catalytic component of the complex. The chain is Light-independent protochlorophyllide reductase subunit B from Marchantia polymorpha (Common liverwort).